Consider the following 134-residue polypeptide: UPF0299 membrane protein KPK_1586 (134 aa).

The next 4 membrane-spanning stretches (helical) occupy residues 5–25, 26–46, 66–86, and 93–113; these read LTII…LYAG, IFIA…MLIL, ILIR…MQYW, and LGPV…VVSW.

Belongs to the UPF0299 family.

It is found in the cell inner membrane. In Klebsiella pneumoniae (strain 342), this protein is UPF0299 membrane protein KPK_1586.